The chain runs to 125 residues: Fluoride-specific ion channel FluC (125 aa).

4 helical membrane passes run 4 to 24 (ILLVGAGGALGSVLRYLVGLW), 32 to 52 (AFPWGTLFVNVTGSFLIGFLA), 68 to 88 (FLITGVLGGYTTFSAFSLDAI), and 100 to 120 (LAYIVASVGLSMLAVFAGLAL). Residues glycine 75 and threonine 78 each contribute to the Na(+) site.

Belongs to the fluoride channel Fluc/FEX (TC 1.A.43) family.

Its subcellular location is the cell inner membrane. The enzyme catalyses fluoride(in) = fluoride(out). With respect to regulation, na(+) is not transported, but it plays an essential structural role and its presence is essential for fluoride channel function. In terms of biological role, fluoride-specific ion channel. Important for reducing fluoride concentration in the cell, thus reducing its toxicity. The polypeptide is Fluoride-specific ion channel FluC (Rhizobium meliloti (strain 1021) (Ensifer meliloti)).